The primary structure comprises 182 residues: Probable RNA 2'-phosphotransferase (182 aa).

Belongs to the KptA/TPT1 family.

Removes the 2'-phosphate from RNA via an intermediate in which the phosphate is ADP-ribosylated by NAD followed by a presumed transesterification to release the RNA and generate ADP-ribose 1''-2''-cyclic phosphate (APPR&gt;P). May function as an ADP-ribosylase. This is Probable RNA 2'-phosphotransferase from Pseudomonas aeruginosa (strain UCBPP-PA14).